A 200-amino-acid chain; its full sequence is Casparian strip membrane protein 1 (200 aa).

Residues 1–38 lie on the Cytoplasmic side of the membrane; sequence MSTTIEIPAESSAVAKGKAPLIGASSSSYEKKGGYKKG. The helical transmembrane segment at 39-59 threads the bilayer; that stretch reads IAIFDFILRLGAVISALSAAA. Residues 60–88 are Extracellular-facing; sequence TMGTSDETLPFFTQFFQFEAGYDDFPTFQ. Residues 89 to 109 traverse the membrane as a helical segment; that stretch reads FFVIAMGFVGGYLVLSLPFSV. The Cytoplasmic segment spans residues 110-121; sequence VAIIRPHAVGIR. Residues 122-142 form a helical membrane-spanning segment; sequence LLLLILDTVALTLNTAAAAAA. Topologically, residues 143-175 are extracellular; it reads AAIVYLAHNGNQSANWLAVCQQFGDFCQKVSGG. Asparagine 153 is a glycosylation site (N-linked (GlcNAc...) asparagine). The helical transmembrane segment at 176–196 threads the bilayer; the sequence is VVASFVSVLVFLLLVVMSAVA. At 197–200 the chain is on the cytoplasmic side; sequence LRKH.

Belongs to the Casparian strip membrane proteins (CASP) family. In terms of assembly, homodimer and heterodimers.

Its subcellular location is the cell membrane. In terms of biological role, regulates membrane-cell wall junctions and localized cell wall deposition. Required for establishment of the Casparian strip membrane domain (CSD) and the subsequent formation of Casparian strips, a cell wall modification of the root endodermis that determines an apoplastic barrier between the intraorganismal apoplasm and the extraorganismal apoplasm and prevents lateral diffusion. The sequence is that of Casparian strip membrane protein 1 from Ricinus communis (Castor bean).